Here is a 432-residue protein sequence, read N- to C-terminus: Glutamyl-tRNA reductase (432 aa).

Substrate contacts are provided by residues 49–52 (TCNR), serine 109, 114–116 (EGQ), and glutamine 120. The active-site Nucleophile is the cysteine 50. Residue 198–203 (GAGRMS) participates in NADP(+) binding.

Belongs to the glutamyl-tRNA reductase family. In terms of assembly, homodimer.

It carries out the reaction (S)-4-amino-5-oxopentanoate + tRNA(Glu) + NADP(+) = L-glutamyl-tRNA(Glu) + NADPH + H(+). The protein operates within porphyrin-containing compound metabolism; protoporphyrin-IX biosynthesis; 5-aminolevulinate from L-glutamyl-tRNA(Glu): step 1/2. It functions in the pathway porphyrin-containing compound metabolism; chlorophyll biosynthesis. Its function is as follows. Catalyzes the NADPH-dependent reduction of glutamyl-tRNA(Glu) to glutamate 1-semialdehyde (GSA). The protein is Glutamyl-tRNA reductase of Parasynechococcus marenigrum (strain WH8102).